We begin with the raw amino-acid sequence, 251 residues long: Flap endonuclease Xni (251 aa).

Asp-104 provides a ligand contact to Mg(2+). One can recognise a 5'-3' exonuclease domain in the interval Val-160 to Leu-249. Residues Leu-171, Ala-172, Pro-180, Val-182, and Ile-185 each coordinate K(+). Residues Gly-184–Ser-189 are interaction with DNA.

This sequence belongs to the Xni family. Mg(2+) is required as a cofactor. It depends on K(+) as a cofactor.

Its function is as follows. Has flap endonuclease activity. During DNA replication, flap endonucleases cleave the 5'-overhanging flap structure that is generated by displacement synthesis when DNA polymerase encounters the 5'-end of a downstream Okazaki fragment. This chain is Flap endonuclease Xni, found in Escherichia coli O45:K1 (strain S88 / ExPEC).